The primary structure comprises 1591 residues: Rho guanine nucleotide exchange factor TIAM1 (1591 aa).

Residues 1 to 70 (MGNAESQNVD…TPSIPQSLAE (70 aa)) are disordered. A lipid anchor (N-myristoyl glycine) is attached at Gly2. A compositionally biased stretch (basic and acidic residues) spans 8–19 (NVDHEFYGEKHA). The span at 20 to 49 (SLGRKHTSRSLRLSHKTRRTRHASSGKAIH) shows a compositional bias: basic residues. Over residues 53-67 (EVSTRSSSTPSIPQS) the composition is skewed to low complexity. Residues Ser231, Ser356, and Ser358 each carry the phosphoserine modification. Disordered stretches follow at residues 305–380 (QISL…DRAR) and 393–422 (MSTT…SPGQ). Over residues 340–359 (TTDTDLLSRRSNATNSSYSP) the composition is skewed to polar residues. Positions 367 to 376 (GSDSGSSSTG) are enriched in low complexity. Residues 412–422 (QSSGTLSSPGQ) show a composition bias toward polar residues. Residues 434-549 (VRKAGALAVK…TAIHSACAAA (116 aa)) enclose the PH 1 domain. Ser695 is modified (phosphoserine). Residues 765 to 832 (TPSWFCLPNN…QPEEDIYELL (68 aa)) enclose the RBD domain. Tyr829 is modified (phosphotyrosine; by NTRK2). The PDZ domain occupies 845–908 (NIHIEKSDAA…NNRAAGTLNS (64 aa)). Residues 933 to 1034 (GVELLENPPH…TSPQLATTRQ (102 aa)) form a disordered region. Over residues 958-975 (LTSNPGHSLSSEQGSSAE) the composition is skewed to polar residues. Residues 977–990 (APEEGEGPDLESSD) show a composition bias toward acidic residues. The span at 1014 to 1028 (PSDSSPSPQDATSPQ) shows a compositional bias: low complexity. One can recognise a DH domain in the interval 1040–1234 (KLRKVICELL…NKVASHINEM (195 aa)). The PH 2 domain occupies 1261–1397 (DLSMGDLLLH…KSVHSILRDK (137 aa)). Residue Tyr1323 is modified to Phosphotyrosine. Glycyl lysine isopeptide (Lys-Gly) (interchain with G-Cter in ubiquitin) cross-links involve residues Lys1404 and Lys1420. Positions 1456–1481 (TIDSDAISASSPEKEPQQPAGGGDTD) are disordered. The residue at position 1519 (Ser1519) is a Phosphoserine.

It belongs to the TIAM family. Component of the Par polarity complex, composed of at least phosphorylated PRKCZ, PARD3 and TIAM1. Interacts with BAIAP2. Interacts (via PDZ domain) with CNTNAP4, SDC1 and SDC3 (via C-terminus). Interacts with CD44, PARD3 and MAPK8IP2. Interacts with EPHA8; regulates clathrin-mediated endocytosis of EPHA8. Interacts with NTRK2; mediates the activation of RAC1 by BDNF. Ubiquitinated. Undergoes 'Lys-48' ubiquitination at Lys-1404 and Lys-1420 by a CUL3(KBTBD6/7) E3 ubiquitin ligase complex composed of CUL3, RBX1, KBTBD6 and KBTBD7. 'Lys-48' ubiquitination at Lys-1404 and Lys-1420 triggers proteasomal degradation. Ubiquitination at Lys-1404 and Lys-1420 by CUL3(KBTBD6/7) also requires the membrane-associated protein GABARAP and may therefore be spatially restricted within the cell. In terms of tissue distribution, highly expressed in brain and testis and at low or moderate levels in almost all other normal tissues. Found in virtually all analyzed tumor cell lines including B- and T-lymphomas, neuroblastomas, melanomas and carcinomas.

The protein localises to the cell junction. It is found in the cell membrane. Functionally, guanyl-nucleotide exchange factor that activates RHO-like proteins and connects extracellular signals to cytoskeletal activities. Activates RAC1, CDC42, and to a lesser extent RHOA and their downstream signaling to regulate processes like cell adhesion and cell migration. The chain is Rho guanine nucleotide exchange factor TIAM1 from Mus musculus (Mouse).